The following is a 283-amino-acid chain: Pantothenate synthetase (283 aa).

30 to 37 (MGNLHAGH) contacts ATP. His-37 (proton donor) is an active-site residue. Residue Gln-61 participates in (R)-pantoate binding. Gln-61 contributes to the beta-alanine binding site. 149–152 (GEKD) is an ATP binding site. Position 155 (Gln-155) interacts with (R)-pantoate. ATP-binding positions include Val-178 and 186–189 (LSSR).

This sequence belongs to the pantothenate synthetase family. Homodimer.

Its subcellular location is the cytoplasm. The catalysed reaction is (R)-pantoate + beta-alanine + ATP = (R)-pantothenate + AMP + diphosphate + H(+). It participates in cofactor biosynthesis; (R)-pantothenate biosynthesis; (R)-pantothenate from (R)-pantoate and beta-alanine: step 1/1. Catalyzes the condensation of pantoate with beta-alanine in an ATP-dependent reaction via a pantoyl-adenylate intermediate. The polypeptide is Pantothenate synthetase (Pseudomonas paraeruginosa (strain DSM 24068 / PA7) (Pseudomonas aeruginosa (strain PA7))).